The following is a 133-amino-acid chain: NADPH-dependent 7-cyano-7-deazaguanine reductase (133 aa).

Catalysis depends on cysteine 49, which acts as the Thioimide intermediate. The active-site Proton donor is the aspartate 56. Substrate contacts are provided by residues 71 to 73 (IEL) and 90 to 91 (HE).

Belongs to the GTP cyclohydrolase I family. QueF type 1 subfamily.

It is found in the cytoplasm. It carries out the reaction 7-aminomethyl-7-carbaguanine + 2 NADP(+) = 7-cyano-7-deazaguanine + 2 NADPH + 3 H(+). It functions in the pathway tRNA modification; tRNA-queuosine biosynthesis. In terms of biological role, catalyzes the NADPH-dependent reduction of 7-cyano-7-deazaguanine (preQ0) to 7-aminomethyl-7-deazaguanine (preQ1). In Leptospira borgpetersenii serovar Hardjo-bovis (strain JB197), this protein is NADPH-dependent 7-cyano-7-deazaguanine reductase.